A 298-amino-acid chain; its full sequence is MKLQTLQALICIEEVGSLRAAAQLLHLSQPALSAAIQQLEDELKAPLLVRTKRGVSLTSFGQAFMKHARLIVTESRRAQEEIGQLRGRWEGHITFAASPAIALAALPLALASFAREFPDVTVNVRDGMYPAVSPQLRDGTLDFALTAAHKHDIDTDLEAQPLYVSDVVIVGQRQHPMANATRLAELQECRWAFSSAPRGPGAIIRNAFARYGLPEPKLGLVCESFLALPGVVAHSDLLTTMPRTLYERNAFKDQLCSIPLQDALPNPTIYVLRRHDLPVTPAAAGLIRWIQHHALQTG.

The region spanning 1-58 (MKLQTLQALICIEEVGSLRAAAQLLHLSQPALSAAIQQLEDELKAPLLVRTKRGVSLT) is the HTH lysR-type domain. Residues 18 to 37 (LRAAAQLLHLSQPALSAAIQ) constitute a DNA-binding region (H-T-H motif). Toluene-4-sulfonate contacts are provided by S98 and A100.

This sequence belongs to the LysR transcriptional regulatory family. In terms of assembly, homotetramer. Dimer of dimers related by a twofold axis.

Sensitive to oxygen. Functionally, regulates expression of the tsaMBCD1 operon and of tsaT in response to p-toluenesulfonate (TSA). Acts by binding directly to the promoter region. Binding to the tsa promoter depends on TSA concentration. The protein is HTH-type transcriptional regulator TsaR (tsaR) of Comamonas testosteroni (Pseudomonas testosteroni).